A 774-amino-acid chain; its full sequence is Fe(3+) dicitrate transport protein FecA (774 aa).

A signal peptide spans 1–33; the sequence is MTPLRVFRKTTPLVNTIRLSLLPLAGLSFSAFA. The short motif at 56–63 is the TonB box element; that stretch reads FTLSVDAS. One can recognise a TBDR plug domain in the interval 129–250; it reads DVFEHAGARD…VGGVVNFVTR (122 aa). The 520-residue stretch at 255–774 folds into the TBDR beta-barrel domain; sequence DFGIEAGVEG…TLYMQGSLKF (520 aa). The TonB C-terminal box motif lies at 757 to 774; sequence GIYAGQPRTLYMQGSLKF.

This sequence belongs to the TonB-dependent receptor family. As to quaternary structure, interacts (via periplasmic N-terminus) with FecR (via periplasmic C-terminus).

It is found in the cell outer membrane. Functionally, fecA is the outer membrane receptor protein in the Fe(3+) dicitrate transport system. The polypeptide is Fe(3+) dicitrate transport protein FecA (fecA) (Escherichia coli (strain K12)).